The primary structure comprises 745 residues: Phosphoribosylformylglycinamidine synthase subunit PurL (745 aa).

Residue His47 is part of the active site. Positions 50 and 90 each coordinate ATP. Glu92 contacts Mg(2+). Substrate is bound by residues 93–96 and Arg115; that span reads SHNH. His94 (proton acceptor) is an active-site residue. Mg(2+) is bound at residue Asp116. Residue Gln240 participates in substrate binding. Asp268 contributes to the Mg(2+) binding site. Residue 312 to 314 coordinates substrate; the sequence is ESQ. ATP is bound by residues Asn501 and Gly538. Residue Asn539 coordinates Mg(2+). Substrate is bound at residue Ser541.

This sequence belongs to the FGAMS family. Monomer. Part of the FGAM synthase complex composed of 1 PurL, 1 PurQ and 2 PurS subunits.

Its subcellular location is the cytoplasm. The enzyme catalyses N(2)-formyl-N(1)-(5-phospho-beta-D-ribosyl)glycinamide + L-glutamine + ATP + H2O = 2-formamido-N(1)-(5-O-phospho-beta-D-ribosyl)acetamidine + L-glutamate + ADP + phosphate + H(+). It functions in the pathway purine metabolism; IMP biosynthesis via de novo pathway; 5-amino-1-(5-phospho-D-ribosyl)imidazole from N(2)-formyl-N(1)-(5-phospho-D-ribosyl)glycinamide: step 1/2. Functionally, part of the phosphoribosylformylglycinamidine synthase complex involved in the purines biosynthetic pathway. Catalyzes the ATP-dependent conversion of formylglycinamide ribonucleotide (FGAR) and glutamine to yield formylglycinamidine ribonucleotide (FGAM) and glutamate. The FGAM synthase complex is composed of three subunits. PurQ produces an ammonia molecule by converting glutamine to glutamate. PurL transfers the ammonia molecule to FGAR to form FGAM in an ATP-dependent manner. PurS interacts with PurQ and PurL and is thought to assist in the transfer of the ammonia molecule from PurQ to PurL. This is Phosphoribosylformylglycinamidine synthase subunit PurL from Leptospira interrogans serogroup Icterohaemorrhagiae serovar Lai (strain 56601).